The following is a 484-amino-acid chain: MQSHQNRSRLSLILRSRFIPSFSSPLSLFVVLAAVPLPIYFSGLLSGRNNKPLSVMRLNSNLASSMVESNISCTTFNILAPIYKRVDQKNHSTRESDFRTLWLARNQRILDLLLHQRSSVICLQEVWVGNEELVNMYHHQLSSSGYTIYQLARTNSRGDGLLTAIHKDHFKVVNYRELLFNDFGDRVAQLLHVKTVIPFPLNGKQDVQQEVIIVNTHLLFPHDSSLSIVRLHQVYKILEYLEAYQKENKLNHMPIILCGDWNGSKRGHVYKFLRSQGFISSYDDAHQYTDSDAHRWVSHRNHRGNICGVDFIWLCNPSDSRKPLRTSWVEAVFSIIKYQLHKASIAEDDAFTFLGAKNHSDSLTYSDFCLALQKVNLTGIPHGLSFEETKELWVRADLDGNGVFDYEELKKIWNMTMVNQPGNCKESVMESKKEEGEDEAIGLKVNKAILFPQEAEKGLWPENYNISDHACLTVQFSPVKMLCS.

Residues 25-45 (PLSLFVVLAAVPLPIYFSGLL) form a helical membrane-spanning segment. An EF-hand domain is found at 384–419 (LSFEETKELWVRADLDGNGVFDYEELKKIWNMTMVN). Ca(2+) is bound by residues Asp397, Asp399, Asn401, and Glu408.

It is found in the membrane. This is an uncharacterized protein from Arabidopsis thaliana (Mouse-ear cress).